Reading from the N-terminus, the 108-residue chain is MVDELEKNQVQPQETEENKENALYDEIDKRIQKQFENYLKTNEQLDNANKLVEAKLKEIKDLENTFKQREQELLNKIATLEQNQQFVNIHQEKPVVEDANSHFLKFFN.

The interval 1–23 (MVDELEKNQVQPQETEENKENAL) is disordered.

This is an uncharacterized protein from Ureaplasma parvum serovar 3 (strain ATCC 700970).